The chain runs to 329 residues: DNA-directed RNA polymerase subunit alpha (329 aa).

The tract at residues 1 to 235 is alpha N-terminal domain (alpha-NTD); the sequence is MQGSVTEFLK…EQLEAFVDLR (235 aa). Residues 249 to 329 form an alpha C-terminal domain (alpha-CTD) region; sequence FDPILLRPVD…NWPPASIADE (81 aa).

The protein belongs to the RNA polymerase alpha chain family. In terms of assembly, homodimer. The RNAP catalytic core consists of 2 alpha, 1 beta, 1 beta' and 1 omega subunit. When a sigma factor is associated with the core the holoenzyme is formed, which can initiate transcription.

It catalyses the reaction RNA(n) + a ribonucleoside 5'-triphosphate = RNA(n+1) + diphosphate. DNA-dependent RNA polymerase catalyzes the transcription of DNA into RNA using the four ribonucleoside triphosphates as substrates. This chain is DNA-directed RNA polymerase subunit alpha, found in Cronobacter sakazakii (strain ATCC BAA-894) (Enterobacter sakazakii).